The chain runs to 90 residues: Putative regulatory protein NT01CX_2250 (90 aa).

Belongs to the RemA family.

The protein is Putative regulatory protein NT01CX_2250 of Clostridium novyi (strain NT).